We begin with the raw amino-acid sequence, 238 residues long: Large ribosomal subunit protein uL1 (238 aa).

It belongs to the universal ribosomal protein uL1 family. Part of the 50S ribosomal subunit.

Its function is as follows. Binds directly to 23S rRNA. The L1 stalk is quite mobile in the ribosome, and is involved in E site tRNA release. In terms of biological role, protein L1 is also a translational repressor protein, it controls the translation of the L11 operon by binding to its mRNA. This Frankia casuarinae (strain DSM 45818 / CECT 9043 / HFP020203 / CcI3) protein is Large ribosomal subunit protein uL1.